We begin with the raw amino-acid sequence, 147 residues long: Myoglobin (147 aa).

The region spanning 2–141 (ADFDAVLKCW…IIADLEANYK (140 aa)) is the Globin domain. His-60 contributes to the nitrite binding site. His-60 is a binding site for O2. A heme b-binding site is contributed by His-89.

The protein belongs to the globin family. Monomeric.

It is found in the cytoplasm. The protein resides in the sarcoplasm. The enzyme catalyses Fe(III)-heme b-[protein] + nitric oxide + H2O = Fe(II)-heme b-[protein] + nitrite + 2 H(+). It carries out the reaction H2O2 + AH2 = A + 2 H2O. In terms of biological role, monomeric heme protein which primary function is to store oxygen and facilitate its diffusion within muscle tissues. Reversibly binds oxygen through a pentacoordinated heme iron and enables its timely and efficient release as needed during periods of heightened demand. Depending on the oxidative conditions of tissues and cells, and in addition to its ability to bind oxygen, it also has a nitrite reductase activity whereby it regulates the production of bioactive nitric oxide. Under stress conditions, like hypoxia and anoxia, it also protects cells against reactive oxygen species thanks to its pseudoperoxidase activity. The polypeptide is Myoglobin (mb) (Thunnus obesus (Bigeye tuna)).